Reading from the N-terminus, the 634-residue chain is Chaperone protein HtpG (634 aa).

Residues 1 to 342 (MSVETQKETL…SNDLSLNVSR (342 aa)) are a; substrate-binding. The tract at residues 343–559 (EILQKDPVID…EQDLGLQMRQ (217 aa)) is b. Residues 560–634 (ILEASGQKVP…LNKLLVELSA (75 aa)) form a c region.

The protein belongs to the heat shock protein 90 family. Homodimer.

The protein localises to the cytoplasm. In terms of biological role, molecular chaperone. Has ATPase activity. The protein is Chaperone protein HtpG of Pseudomonas paraeruginosa (strain DSM 24068 / PA7) (Pseudomonas aeruginosa (strain PA7)).